The primary structure comprises 121 residues: Large ribosomal subunit protein bL12 (121 aa).

It belongs to the bacterial ribosomal protein bL12 family. Homodimer. Part of the ribosomal stalk of the 50S ribosomal subunit. Forms a multimeric L10(L12)X complex, where L10 forms an elongated spine to which 2 to 4 L12 dimers bind in a sequential fashion. Binds GTP-bound translation factors.

Functionally, forms part of the ribosomal stalk which helps the ribosome interact with GTP-bound translation factors. Is thus essential for accurate translation. The sequence is that of Large ribosomal subunit protein bL12 from Streptococcus pyogenes serotype M3 (strain ATCC BAA-595 / MGAS315).